The following is a 224-amino-acid chain: MSAVGPAAAHLHRPGDSHSDCVSFLGAQLPPEVAAMPQLLGDLDRATFRKLLKLVVSSLQGEDCREAVQHLRAGANLPEEQLGALIAGTHTLLQQALRLPPASLKPDTFKNQLQELCIPQDLVVDLASVVFGSQRPLLDSVARQQGAWLPHIADFRWRVDVAISTSALARSLQPSVLMHLKLSDGSALRFEVPTAKFQELRFAVALVLKEMADLEKRCERKLQD.

Ser2 is modified (N-acetylserine). The COMM domain occupies His151 to Glu215.

It belongs to the COMM domain-containing protein 5 family. Component of the commander complex consisting of the CCC subcomplex and the retriever subcomplex. Component of the CCC (COMMD/CCDC22/CCDC93) subcomplex consisting of COMMD1, COMMD2, COMMD3, COMMD4, COMMD5, COMMD6, COMMD7, COMMD8, COMMD9, COMMD10, CCDC22 and CCDC93; within the complex forms a heterodimer with COMMD10. Interacts (via COMM domain) with COMMD1 (via COMM domain). Interacts with RELA, RELB, NFKB1/p105. Interacts with CCDC22, CCDC93, SCNN1B, CUL2, CUL3, CUL4A, CUL4B, CUL7.

The protein localises to the nucleus. Its subcellular location is the cytoplasm. Its function is as follows. Scaffold protein in the commander complex that is essential for endosomal recycling of transmembrane cargos; the commander complex is composed of the CCC subcomplex and the retriever subcomplex. May modulate activity of cullin-RING E3 ubiquitin ligase (CRL) complexes. Negatively regulates cell proliferation. Negatively regulates cell cycle G2/M phase transition probably by transactivating p21/CDKN1A through the p53/TP53-independent signaling pathway. Involved in kidney proximal tubule morphogenesis. Down-regulates activation of NF-kappa-B. The polypeptide is COMM domain-containing protein 5 (COMMD5) (Bos taurus (Bovine)).